Consider the following 1189-residue polypeptide: Intraflagellar transport protein 122 homolog (1189 aa).

8 WD repeats span residues 16–54, 57–97, 99–135, 137–175, 180–223, 225–264, 266–306, and 459–498; these read KLEQ…MIQP, GHKD…LKYT, NDSI…VSKH, VSSK…KVKI, GALS…VGKD, VLGF…LGPI, EQNS…HGLY, and KQAT…LLFQ.

In terms of assembly, component of the IFT complex A (IFT-A) complex.

The protein resides in the cell projection. The protein localises to the cilium. Its subcellular location is the cytoplasm. It localises to the cytoskeleton. It is found in the cilium basal body. Functionally, required for cilia formation during embryonal development. Acts as a negative regulator of Shh signaling. The chain is Intraflagellar transport protein 122 homolog (ift122) from Xenopus tropicalis (Western clawed frog).